The following is a 249-amino-acid chain: ATP synthase subunit a, chloroplastic (249 aa).

5 helical membrane passes run 40-60 (QVLI…VLAI), 97-117 (VPFI…GALL), 136-156 (INTT…AGLS), 201-221 (LVVV…VMFL), and 222-242 (GLFT…AYIG).

The protein belongs to the ATPase A chain family. In terms of assembly, F-type ATPases have 2 components, CF(1) - the catalytic core - and CF(0) - the membrane proton channel. CF(1) has five subunits: alpha(3), beta(3), gamma(1), delta(1), epsilon(1). CF(0) has four main subunits: a, b, b' and c.

Its subcellular location is the plastid. It is found in the chloroplast thylakoid membrane. In terms of biological role, key component of the proton channel; it plays a direct role in the translocation of protons across the membrane. The polypeptide is ATP synthase subunit a, chloroplastic (Capsella bursa-pastoris (Shepherd's purse)).